A 485-amino-acid chain; its full sequence is Argininosuccinate lyase (485 aa).

Belongs to the lyase 1 family. Argininosuccinate lyase subfamily.

The protein resides in the cytoplasm. It catalyses the reaction 2-(N(omega)-L-arginino)succinate = fumarate + L-arginine. It functions in the pathway amino-acid biosynthesis; L-arginine biosynthesis; L-arginine from L-ornithine and carbamoyl phosphate: step 3/3. This is Argininosuccinate lyase from Halobacterium salinarum (strain ATCC 29341 / DSM 671 / R1).